A 158-amino-acid polypeptide reads, in one-letter code: Transcription elongation factor GreA (158 aa).

Belongs to the GreA/GreB family.

Necessary for efficient RNA polymerase transcription elongation past template-encoded arresting sites. The arresting sites in DNA have the property of trapping a certain fraction of elongating RNA polymerases that pass through, resulting in locked ternary complexes. Cleavage of the nascent transcript by cleavage factors such as GreA or GreB allows the resumption of elongation from the new 3'terminus. GreA releases sequences of 2 to 3 nucleotides. This chain is Transcription elongation factor GreA, found in Verminephrobacter eiseniae (strain EF01-2).